The primary structure comprises 409 residues: Peptidase T (409 aa).

His-78 contributes to the Zn(2+) binding site. Asp-80 is an active-site residue. Asp-140 contacts Zn(2+). The Proton acceptor role is filled by Glu-174. Residues Glu-175, Asp-197, and His-379 each coordinate Zn(2+).

It belongs to the peptidase M20B family. The cofactor is Zn(2+).

It is found in the cytoplasm. The enzyme catalyses Release of the N-terminal residue from a tripeptide.. Cleaves the N-terminal amino acid of tripeptides. This is Peptidase T from Photobacterium profundum (strain SS9).